The following is a 275-amino-acid chain: Trypsin-3 (275 aa).

The N-terminal stretch at 1–22 (MISNKIAILLAVLVVAVACAQA) is a signal peptide. Positions 23–48 (RVALKHRSVQALPRFLPRPKYDVGHR) are cleaved as a propeptide — activation peptide. One can recognise a Peptidase S1 domain in the interval 49–274 (IVGGFEIDVS…VRDWVRENSG (226 aa)). Cys74 and Cys90 are oxidised to a cystine. Residues His89 and Asp134 each act as charge relay system in the active site. 2 cysteine pairs are disulfide-bonded: Cys199–Cys215 and Cys226–Cys250. Catalysis depends on Ser230, which acts as the Charge relay system.

Belongs to the peptidase S1 family. In terms of tissue distribution, expressed in the midgut. Expression levels drop a few hours after blood feeding and pick up again 28 hours later.

It localises to the secreted. The catalysed reaction is Preferential cleavage: Arg-|-Xaa, Lys-|-Xaa.. In terms of biological role, constitutive trypsin that is expressed 2 days after emergence, coinciding with host seeking behavior of the female. This Anopheles gambiae (African malaria mosquito) protein is Trypsin-3 (TRYP3).